Consider the following 97-residue polypeptide: Large ribosomal subunit protein bL28 (97 aa).

It belongs to the bacterial ribosomal protein bL28 family.

This Bartonella quintana (strain Toulouse) (Rochalimaea quintana) protein is Large ribosomal subunit protein bL28.